Consider the following 340-residue polypeptide: MSFFAPRNKKTEQEAKKSIPWVELYRPKTLDQVSSQESTVQVLKKTLLSNNLPHMLFYGSPGTGKTSTILALSRELFGPQLMKSRVLELNASDERGISIIREKVKSFAKTTVTNKVDGYPCPPFKIIILDEADSMTQDAQAALRRTMESYARITRFCLICNYMTRIIDPLSSRCSKYRFKPLDNENMVKRLEFIAADQAVSMEPGVVNALVECSGGDMRKAITFLQSAANLHQGTPITISSVEELAGAVPYNIIRSLLDTAYTKNVSNIETLSRDVAAEGYSTGIILSQLHDVLLKEETLSSPVKYKIFMKLSEVDKRLNDGADETLQLLDLLSSISVVC.

Residue 59–66 (GSPGTGKT) participates in ATP binding.

It belongs to the activator 1 small subunits family. Heteropentamer of subunits rfc1, rfc2, rfc3, rfc4 and rfc5 that forms a complex (RFC) with PCNA in the presence of ATP. Two other complexes exist where rfc1 can be replaced by either ctf18 or elg1 to form the ctf18-RFC or the elg1-RFC complexes respectively.

Its subcellular location is the nucleus. In terms of biological role, the elongation of primed DNA templates by DNA polymerase delta and epsilon requires the action of the accessory proteins PCNA and activator 1. Subunit 2 binds ATP and single-stranded DNA. The protein is Replication factor C subunit 2 (rfc2) of Schizosaccharomyces pombe (strain 972 / ATCC 24843) (Fission yeast).